The chain runs to 258 residues: Methionine aminopeptidase (258 aa).

His-84 serves as a coordination point for substrate. Residues Asp-102, Asp-113, and His-176 each coordinate a divalent metal cation. His-183 serves as a coordination point for substrate. Positions 211 and 242 each coordinate a divalent metal cation.

It belongs to the peptidase M24A family. Methionine aminopeptidase type 1 subfamily. As to quaternary structure, monomer. The cofactor is Co(2+). Requires Zn(2+) as cofactor. Mn(2+) serves as cofactor. It depends on Fe(2+) as a cofactor.

The enzyme catalyses Release of N-terminal amino acids, preferentially methionine, from peptides and arylamides.. Removes the N-terminal methionine from nascent proteins. The N-terminal methionine is often cleaved when the second residue in the primary sequence is small and uncharged (Met-Ala-, Cys, Gly, Pro, Ser, Thr, or Val). Requires deformylation of the N(alpha)-formylated initiator methionine before it can be hydrolyzed. The sequence is that of Methionine aminopeptidase from Aquifex aeolicus (strain VF5).